Consider the following 375-residue polypeptide: Beta-1,3-N-acetylglucosaminyltransferase lunatic fringe (375 aa).

Over 1-8 (MLKNWGKK) the chain is Cytoplasmic. The helical; Signal-anchor for type II membrane protein transmembrane segment at 9–29 (LLLSIVGATLTCLLVLVVDQQ) threads the bilayer. Residues 30-375 (SRHMLETQSD…TPWCPWKAAY (346 aa)) are Lumenal-facing. The tract at residues 53–73 (DLDPANPGDGGDPANSAQDSG) is disordered. Arg-125 serves as a coordination point for substrate. A glycan (N-linked (GlcNAc...) asparagine) is linked at Asn-163. Disulfide bonds link Cys-164–Cys-175 and Cys-193–Cys-256. Asp-197 contributes to the substrate binding site. Asp-198 provides a ligand contact to Mn(2+). Asp-286 is a catalytic residue. Residue His-310 coordinates Mn(2+). A disulfide bond links Cys-360 and Cys-369.

Belongs to the glycosyltransferase 31 family. Requires Mn(2+) as cofactor. The cofactor is Co(2+). In terms of processing, a soluble form may be derived from the membrane form by proteolytic processing. In terms of tissue distribution, detected in the neural tube, the eye and the otic vesicle, expression coincides with the region that produces the medial, intermediate and lateral neurons.

The protein localises to the golgi apparatus membrane. It catalyses the reaction 3-O-(alpha-L-fucosyl)-L-threonyl-[EGF-like domain protein] + UDP-N-acetyl-alpha-D-glucosamine = 3-O-(N-acetyl-beta-D-glucosaminyl-(1-&gt;3)-alpha-L-fucosyl)-L-threonyl-[EGF-like domain protein] + UDP + H(+). The enzyme catalyses 3-O-(alpha-L-fucosyl)-L-seryl-[EGF-like domain protein] + UDP-N-acetyl-alpha-D-glucosamine = 3-O-(N-acetyl-beta-D-glucosaminyl-(1-&gt;3)-alpha-L-fucosyl)-L-seryl-[EGF-like domain protein] + UDP + H(+). In terms of biological role, glycosyltransferase that initiates the elongation of O-linked fucose residues attached to EGF-like repeats in the extracellular domain of Notch molecules. Essential mediator of somite segmentation and patterning. May be involved in mesoderm development. The chain is Beta-1,3-N-acetylglucosaminyltransferase lunatic fringe (lfng) from Xenopus laevis (African clawed frog).